Reading from the N-terminus, the 386-residue chain is uncharacterized protein (386 aa).

Transmembrane regions (helical) follow at residues 48 to 68, 78 to 98, 136 to 156, 171 to 191, 213 to 233, 253 to 273, 285 to 305, 316 to 336, and 344 to 364; these read NLIT…MLVY, PSWV…FDAI, LQLD…YFYI, YFSG…LTAI, FLPY…ALLL, VIKA…VFSL, FLTI…VVIV, WNVL…FGVL, and FFCY…HVIA.

This sequence belongs to the CDP-alcohol phosphatidyltransferase class-I family.

Its subcellular location is the membrane. This is an uncharacterized protein from Schizosaccharomyces pombe (strain 972 / ATCC 24843) (Fission yeast).